The sequence spans 730 residues: Catalase-peroxidase 1 (730 aa).

A cross-link (tryptophyl-tyrosyl-methioninium (Trp-Tyr) (with M-243)) is located at residues 92-217 (WHSAGTYRTT…LGAAVMGLIY (126 aa)). H93 functions as the Proton acceptor in the catalytic mechanism. Positions 217–243 (YVDPEGPNGNPDPLASAENIRESFGRM) form a cross-link, tryptophyl-tyrosyl-methioninium (Tyr-Met) (with W-92). A heme b-binding site is contributed by H258.

Belongs to the peroxidase family. Peroxidase/catalase subfamily. In terms of assembly, homodimer or homotetramer. Heme b is required as a cofactor. Post-translationally, formation of the three residue Trp-Tyr-Met cross-link is important for the catalase, but not the peroxidase activity of the enzyme.

The catalysed reaction is H2O2 + AH2 = A + 2 H2O. It catalyses the reaction 2 H2O2 = O2 + 2 H2O. In terms of biological role, bifunctional enzyme with both catalase and broad-spectrum peroxidase activity. The protein is Catalase-peroxidase 1 of Haloarcula marismortui (strain ATCC 43049 / DSM 3752 / JCM 8966 / VKM B-1809) (Halobacterium marismortui).